Consider the following 47-residue polypeptide: uncharacterized protein (47 aa).

This is an uncharacterized protein from Escherichia coli.